Here is a 470-residue protein sequence, read N- to C-terminus: TNF receptor-associated factor 4 (470 aa).

The RING-type zinc finger occupies 18 to 58 (CPLCGKPMREPVQVSTCGHRFCDTCLQEFLSEGVFKCPEDQ). 3 consecutive TRAF-type zinc fingers follow at residues 101–154 (GHLN…EAYE), 155–208 (SHEG…DTIQ), and 209–267 (SHQY…LAMG). Residue Lys263 forms a Glycyl lysine isopeptide (Lys-Gly) (interchain with G-Cter in ubiquitin) linkage. A coiled-coil region spans residues 277–310 (HLAMMCALVSRQRQELQELRRELEELSIGSDGVL). One can recognise an MATH domain in the interval 307–462 (DGVLIWKIGS…DDAVFIRASV (156 aa)). Ser426 bears the Phosphoserine mark.

Belongs to the TNF receptor-associated factor family. B subfamily. In terms of assembly, homotrimer. Interacts with LTBR/TNFRSF3, NGFR/TNFRSF16, RPS6KB1 and TGFB1I1. Interacts with SMURF1. Interacts (via TRAF domain) with MAP3K4 (via kinase domain). Interacts with NCF1, TICAM1, IRAK1 and TRAF6, and is probably part of a complex containing TRAF4, NCF1, TICAM1, IRAK1 and TRAF6. Interacts (via MATH domain) with GP6 and GP1BB. Interacts with EGFR (via C-terminal region); this interaction promotes the formation of EGFR asymmetric dimers. Interacts with PKM; this interaction promotes PKM kinase activity. Polyubiquitinated, leading to its proteasomal degradation. Ubiquitinated at Lys-263 by the SCF(FBXL2) complex, leading to its degradation by the proteasome. As to expression, predominantly expressed in brain. Preferentially expressed by postmitotic undifferentiated neurons in developing central (CNS) and peripheral (PNS) nervous system, and in nervous tissues of sensory organs. In the embryo, protein expression was shown in brain, thymus, salivary glands and intestine. In the adult, protein expression is restricted to the brain (hippocampus and olfactory bulb).

The protein localises to the cytoplasm. It is found in the nucleus. Its subcellular location is the perinuclear region. The protein resides in the cell junction. It localises to the tight junction. The protein localises to the cell membrane. It is found in the cytoskeleton. The enzyme catalyses S-ubiquitinyl-[E2 ubiquitin-conjugating enzyme]-L-cysteine + [acceptor protein]-L-lysine = [E2 ubiquitin-conjugating enzyme]-L-cysteine + N(6)-ubiquitinyl-[acceptor protein]-L-lysine.. It functions in the pathway protein degradation; proteasomal ubiquitin-dependent pathway. Its function is as follows. Adapter protein with E3 ligase activity that is involved in many diverse biological processes including cell proliferation, migration, differentiation, DNA repair, platelet activation or apoptosis. Promotes EGFR-mediated signaling by facilitating the dimerization of EGFR and downstream AKT activation thereby promoting cell proliferation. Ubiquitinates SMURF2 through 'Lys-48'-linked ubiquitin chain leading to SMURF2 degradation through the proteasome and subsequently osteogenic differentiation. Promotes 'Lys-63'-mediated ubiquitination of CHK1 which in turn activates cell cycle arrest and activation of DNA repair. In addition, promotes an atypical 'Lys-29'-linked ubiquitination at the C-terminal end of IRS1 which is crucial for insulin-like growth factor (IGF) signal transduction. Regulates activation of NF-kappa-B in response to signaling through Toll-like receptors. Required for normal skeleton development, and for normal development of the respiratory tract. Required for activation of RPS6KB1 in response to TNF signaling. Modulates TRAF6 functions. Inhibits adipogenic differentiation by activating pyruvate kinase PKM activity and subsequently the beta-catenin signaling pathway. This chain is TNF receptor-associated factor 4 (Traf4), found in Mus musculus (Mouse).